The following is a 688-amino-acid chain: MIOREX complex component 1 (688 aa).

A disordered region spans residues 1 to 24; that stretch reads MGLKITKGQLRTKDLNQSSSKSSQ. Residues 1 to 46 constitute a mitochondrion transit peptide; it reads MGLKITKGQLRTKDLNQSSSKSSQSSRIGVDTCIFTRMLPRINTAI.

Associates with the mitochondrial ribosome.

It localises to the mitochondrion. Component of MIOREX complexes, large expressome-like assemblies of ribosomes with factors involved in all the steps of post-transcriptional gene expression. This chain is MIOREX complex component 1, found in Saccharomyces cerevisiae (strain ATCC 204508 / S288c) (Baker's yeast).